A 426-amino-acid chain; its full sequence is Serine hydroxymethyltransferase (426 aa).

(6S)-5,6,7,8-tetrahydrofolate contacts are provided by residues leucine 122 and 126–128 (GHL). N6-(pyridoxal phosphate)lysine is present on lysine 231. Residues glutamate 247 and 355–357 (SPF) each bind (6S)-5,6,7,8-tetrahydrofolate.

It belongs to the SHMT family. In terms of assembly, homodimer. Requires pyridoxal 5'-phosphate as cofactor.

The protein resides in the cytoplasm. The catalysed reaction is (6R)-5,10-methylene-5,6,7,8-tetrahydrofolate + glycine + H2O = (6S)-5,6,7,8-tetrahydrofolate + L-serine. Its pathway is one-carbon metabolism; tetrahydrofolate interconversion. The protein operates within amino-acid biosynthesis; glycine biosynthesis; glycine from L-serine: step 1/1. Catalyzes the reversible interconversion of serine and glycine with tetrahydrofolate (THF) serving as the one-carbon carrier. This reaction serves as the major source of one-carbon groups required for the biosynthesis of purines, thymidylate, methionine, and other important biomolecules. Also exhibits THF-independent aldolase activity toward beta-hydroxyamino acids, producing glycine and aldehydes, via a retro-aldol mechanism. This Cyanothece sp. (strain PCC 7425 / ATCC 29141) protein is Serine hydroxymethyltransferase.